We begin with the raw amino-acid sequence, 177 residues long: MKLPKEGDFITIQSYKHDGSLHRTWRDTMVLKTTENALIGVNDHTLVTESDGRRWVTREPAIVYFHKKYWFNIIAMIRDNGVSYYCNLASPYMMDTEALKYIDYDLDVKVFADGEKRLLDVDEYEIHKKEMQYSADMDFILKENVKILVDWINHEKGPFSKAYITIWYKRYLELKNR.

Arg-23 functions as the Proton donor in the catalytic mechanism. Positions 87, 103, 105, 107, 120, and 123 each coordinate Mg(2+).

Belongs to the Ntdp family. The cofactor is Mg(2+).

The catalysed reaction is a ribonucleoside 5'-triphosphate + H2O = a ribonucleoside 5'-diphosphate + phosphate + H(+). It catalyses the reaction a ribonucleoside 5'-diphosphate + H2O = a ribonucleoside 5'-phosphate + phosphate + H(+). Its function is as follows. Has nucleoside phosphatase activity towards nucleoside triphosphates and nucleoside diphosphates. This is Nucleoside triphosphate/diphosphate phosphatase from Streptococcus pyogenes serotype M1.